The following is a 78-amino-acid chain: Acyl carrier protein AcpP (78 aa).

Residues 2–77 (SDTAERVKKI…DAVKYIDKAS (76 aa)) enclose the Carrier domain. Residue serine 37 is modified to O-(pantetheine 4'-phosphoryl)serine.

Belongs to the acyl carrier protein (ACP) family. In terms of processing, 4'-phosphopantetheine is transferred from CoA to a specific serine of apo-ACP by AcpS. This modification is essential for activity because fatty acids are bound in thioester linkage to the sulfhydryl of the prosthetic group.

The protein resides in the cytoplasm. Its pathway is lipid metabolism; fatty acid biosynthesis. In terms of biological role, carrier of the growing fatty acid chain in fatty acid biosynthesis. This chain is Acyl carrier protein AcpP, found in Mesorhizobium japonicum (strain LMG 29417 / CECT 9101 / MAFF 303099) (Mesorhizobium loti (strain MAFF 303099)).